Here is a 188-residue protein sequence, read N- to C-terminus: Elongation factor P (188 aa).

Lys-34 bears the N6-(3,6-diaminohexanoyl)-5-hydroxylysine mark.

This sequence belongs to the elongation factor P family. Post-translationally, may be beta-lysylated on the epsilon-amino group of Lys-34 by the combined action of EpmA and EpmB, and then hydroxylated on the C5 position of the same residue by EpmC (if this protein is present). Lysylation is critical for the stimulatory effect of EF-P on peptide-bond formation. The lysylation moiety may extend toward the peptidyltransferase center and stabilize the terminal 3-CCA end of the tRNA. Hydroxylation of the C5 position on Lys-34 may allow additional potential stabilizing hydrogen-bond interactions with the P-tRNA.

Its subcellular location is the cytoplasm. It functions in the pathway protein biosynthesis; polypeptide chain elongation. In terms of biological role, involved in peptide bond synthesis. Alleviates ribosome stalling that occurs when 3 or more consecutive Pro residues or the sequence PPG is present in a protein, possibly by augmenting the peptidyl transferase activity of the ribosome. Modification of Lys-34 is required for alleviation. The polypeptide is Elongation factor P (Pseudoalteromonas translucida (strain TAC 125)).